Reading from the N-terminus, the 682-residue chain is T-box brain protein 1 (682 aa).

Disordered stretches follow at residues 43–83 (TDNL…RSKL) and 108–127 (SQSS…FPYP). A compositionally biased stretch (polar residues) spans 58–68 (GMTNQSDTDNF). A compositionally biased stretch (low complexity) spans 108–122 (SQSSQPQSAATAPSA). The T-box DNA-binding region spans 213-393 (LWLKFHRHQT…HNPFAKGFRD (181 aa)). Phosphothreonine is present on threonine 408. Serine 410 is subject to Phosphoserine. Disordered regions lie at residues 447-483 (PGAG…SPQR) and 588-658 (GLAA…KSEV). The span at 462 to 472 (PHTNGLLSPQQ) shows a compositional bias: polar residues. The residue at position 594 (serine 594) is a Phosphoserine. Positions 619 to 629 (SSIKSIDSSDS) are enriched in low complexity. At serine 641 the chain carries Phosphoserine.

In terms of assembly, homodimer. Part of a complex containing CASK, TBR1 and TSPYL2; may modulate gene expression in response to neuronal synaptic activity. Interacts with FOXP2. Interacts with FOXP1. Interacts with BCL11A. In terms of tissue distribution, brain.

The protein resides in the nucleus. Functionally, transcriptional repressor involved in multiple aspects of cortical development, including neuronal migration, laminar and areal identity, and axonal projection. As transcriptional repressor of FEZF2, it blocks the formation of the corticospinal (CS) tract from layer 6 projection neurons, thereby restricting the origin of CS axons specifically to layer 5 neurons. This is T-box brain protein 1 (TBR1) from Homo sapiens (Human).